The chain runs to 361 residues: Septin-2 (361 aa).

Tyr17 is modified (phosphotyrosine). Residues 34-306 (KGFEFTLMVV…ENFRSERLKR (273 aa)) enclose the Septin-type G domain. The segment at 44 to 51 (GESGLGKS) is G1 motif. Residues 44 to 52 (GESGLGKST), Thr78, Gly104, and 183 to 186 (KADT) each bind GTP. The tract at residues 101–104 (DTPG) is G3 motif. A G4 motif region spans residues 182–185 (AKAD). Lys190 carries the post-translational modification N6-acetyllysine. Tyr211 carries the phosphotyrosine modification. Ser218 carries the post-translational modification Phosphoserine. Positions 241, 256, and 258 each coordinate GTP. Residues 260–270 (WGVVEVENPEH) are important for dimerization.

Belongs to the TRAFAC class TrmE-Era-EngA-EngB-Septin-like GTPase superfamily. Septin GTPase family. In terms of assembly, septins polymerize into heterooligomeric protein complexes that form filaments, and associate with cellular membranes, actin filaments and microtubules. GTPase activity is required for filament formation. Septin filaments are assembled from asymmetrical heterotrimers, composed of SEPTIN2, SEPTIN6 and SEPTIN7 that associate head-to-head to form a hexameric unit. Interaction between SEPTIN2 and SEPTIN7 seems indirect. Also interacts with SEPTIN9 and SEPTIN5. Interaction with SEPTIN4 not detected. Component of a septin core octameric complex consisting of SEPTIN12, SEPTIN7, SEPTIN6 and SEPTIN2 or SEPTIN4 in the order 12-7-6-2-2-6-7-12 or 12-7-6-4-4-6-7-12 and located in the sperm annulus. Interacts with MAP4. Interacts with DZIP1L. In terms of tissue distribution, widely expressed.

The protein resides in the cytoplasm. It localises to the cytoskeleton. Its subcellular location is the spindle. It is found in the chromosome. The protein localises to the centromere. The protein resides in the kinetochore. It localises to the cleavage furrow. Its subcellular location is the midbody. It is found in the cell cortex. The protein localises to the cell projection. The protein resides in the cilium membrane. It localises to the cilium. Its subcellular location is the flagellum. In terms of biological role, filament-forming cytoskeletal GTPase. Forms a filamentous structure with SEPTIN12, SEPTIN6, SEPTIN2 and probably SEPTIN4 at the sperm annulus which is required for the structural integrity and motility of the sperm tail during postmeiotic differentiation. Required for normal organization of the actin cytoskeleton. Plays a role in the biogenesis of polarized columnar-shaped epithelium by maintaining polyglutamylated microtubules, thus facilitating efficient vesicle transport, and by impeding MAP4 binding to tubulin. Required for the progression through mitosis. Forms a scaffold at the midplane of the mitotic splindle required to maintain CENPE localization at kinetochores and consequently chromosome congression. During anaphase, may be required for chromosome segregation and spindle elongation. Plays a role in ciliogenesis and collective cell movements. In cilia, required for the integrity of the diffusion barrier at the base of the primary cilium that prevents diffusion of transmembrane proteins between the cilia and plasma membranes: probably acts by regulating the assembly of the tectonic-like complex (also named B9 complex) by localizing TMEM231 protein. The polypeptide is Septin-2 (Mus musculus (Mouse)).